Consider the following 962-residue polypeptide: Villin-5 (962 aa).

Gelsolin-like repeat units follow at residues 29–79, 150–190, 262–305, 396–453, 534–574, and 636–677; these read FKPV…DEAG, VRVK…QERA, GQTD…DQRK, LQVW…EDRA, MQAI…EDQE, and LKAT…KKKP. The disordered stretch occupies residues 749 to 785; it reads KPKRRVPAYSSRSTVPDKSQPRSRSMTFSPDRARVRG. Polar residues predominate over residues 758 to 776; that stretch reads SSRSTVPDKSQPRSRSMTF. Phosphoserine occurs at positions 777 and 787. A compositionally biased stretch (low complexity) spans 845 to 862; sequence EKPTPTSQEPPTSPSSSE. A disordered region spans residues 845-917; that stretch reads EKPTPTSQEP…LKTDSEDPVS (73 aa). The span at 863-875 shows a compositional bias: polar residues; it reads ATNQAEAPKSTSE. At Ser883 the chain carries Phosphoserine. The span at 889 to 898 shows a compositional bias: acidic residues; that stretch reads SKEEEAEEES. One can recognise an HP domain in the interval 897–962; it reads ESSLPTFPYE…NKLKMSVNLF (66 aa).

Belongs to the villin/gelsolin family. As to expression, ubiquitous, but expressed preferentially in pollen and stamens.

The protein resides in the cytoplasm. It localises to the cytoskeleton. In terms of biological role, major actin filament stabilizing factor and regulator of actin dynamics. Binds actin and actin filament bundles in a Ca(2+)-insensitive manner, but caps the barbed end of actin filaments and is able to sever them in a calcium-dependent manner. Required for the construction of actin collars in pollen tubes. Acts synergistically with VLN2 (AC O81644) to regulate polarized pollen tube growth. The chain is Villin-5 from Arabidopsis thaliana (Mouse-ear cress).